An 849-amino-acid polypeptide reads, in one-letter code: Putative endoplasmic reticulum mannosidase MNL2 (849 aa).

The Cytoplasmic portion of the chain corresponds to 1 to 12; it reads MSIARLVYSLFR. The chain crosses the membrane as a helical; Signal-anchor for type II membrane protein span at residues 13–32; sequence RVRSVLLLFITISLLFYYTF. Over 33–849 the chain is Lumenal; the sequence is QNEIDILNSY…TQGGHIIKKK (817 aa). N-linked (GlcNAc...) asparagine glycosylation occurs at asparagine 45. The interval 56-79 is disordered; it reads HNTEGSSKLDPPDLSSTGSDRIAT. Cysteine 559 and cysteine 598 form a disulfide bridge.

The protein belongs to the glycosyl hydrolase 47 family. Ca(2+) serves as cofactor.

It localises to the endoplasmic reticulum membrane. It participates in protein modification; protein glycosylation. Its function is as follows. Putative mannosidase involved in glycoprotein quality control since it is involved in the targeting of misfolded glycoproteins for ER-associated protein degradation (ERAD). The chain is Putative endoplasmic reticulum mannosidase MNL2 (MNL2) from Saccharomyces cerevisiae (strain ATCC 204508 / S288c) (Baker's yeast).